Consider the following 122-residue polypeptide: Large ribosomal subunit protein uL14 (122 aa).

It belongs to the universal ribosomal protein uL14 family. Part of the 50S ribosomal subunit. Forms a cluster with proteins L3 and L19. In the 70S ribosome, L14 and L19 interact and together make contacts with the 16S rRNA in bridges B5 and B8.

Functionally, binds to 23S rRNA. Forms part of two intersubunit bridges in the 70S ribosome. This Idiomarina loihiensis (strain ATCC BAA-735 / DSM 15497 / L2-TR) protein is Large ribosomal subunit protein uL14.